The following is a 446-amino-acid chain: 5-hydroxytryptamine receptor (446 aa).

The Extracellular segment spans residues 1–65 (MEGAEGQEEL…AALVRAAAKA (65 aa)). Asparagine 23, asparagine 27, asparagine 36, and asparagine 42 each carry an N-linked (GlcNAc...) asparagine glycan. A helical transmembrane segment spans residues 66-88 (VVLGLLILATVVGNVFVIAAILL). The Cytoplasmic portion of the chain corresponds to 89-98 (ERHLRSAANN). Residues 99–120 (LILSLAVADLLVACLVMPLGAV) traverse the membrane as a helical segment. Residues 121 to 135 (YEVVQRWTLGPELCD) lie on the Extracellular side of the membrane. A disulfide bridge links cysteine 134 with cysteine 214. A helical membrane pass occupies residues 136-157 (MWTSGDVLCCTASILHLVAIAL). Residues 158 to 176 (DRYWAVTNIDYIHASTAKR) are Cytoplasmic-facing. A helical transmembrane segment spans residues 177–199 (VGMMIACVWTVSFFVCIAQLLGW). Over 200-227 (KDPDWNQRVSEDLRCVVSQDVGYQIFAT) the chain is Extracellular. A helical membrane pass occupies residues 228 to 249 (ASSFYVPVLIILILYWRIYQTA). At 250 to 367 (RKRIRRRRGA…SKRERKAAKT (118 aa)) the chain is on the cytoplasmic side. Positions 304 to 324 (TTTGFTNVSSNNTSPEKQSCA) are enriched in polar residues. The tract at residues 304-329 (TTTGFTNVSSNNTSPEKQSCANGLEA) is disordered. A helical membrane pass occupies residues 368–391 (LAIITGAFVACWLPFFVLAILVPT). Over 392 to 399 (CDCEVSPV) the chain is Extracellular. A helical transmembrane segment spans residues 400–422 (LTSLSLWLGYFNSTLNPVIYTVF). Residues 423–446 (SPEFRHAFQRLLCGRRVRRRRAPQ) lie on the Cytoplasmic side of the membrane.

Belongs to the G-protein coupled receptor 1 family.

The protein resides in the cell membrane. In terms of biological role, this is a receptor for 5-hydroxytryptamine (serotonin), a biogenic hormone that function as a neurotransmitter, a hormone, and a mitogen. In Bombyx mori (Silk moth), this protein is 5-hydroxytryptamine receptor.